The sequence spans 421 residues: Eukaryotic translation initiation factor 3 subunit E (421 aa).

One can recognise a PCI domain in the interval F215 to V394.

Belongs to the eIF-3 subunit E family. In terms of assembly, component of the eukaryotic translation initiation factor 3 (eIF-3) complex.

Its subcellular location is the cytoplasm. In terms of biological role, component of the eukaryotic translation initiation factor 3 (eIF-3) complex, which is involved in protein synthesis of a specialized repertoire of mRNAs and, together with other initiation factors, stimulates binding of mRNA and methionyl-tRNAi to the 40S ribosome. The eIF-3 complex specifically targets and initiates translation of a subset of mRNAs involved in cell proliferation. This is Eukaryotic translation initiation factor 3 subunit E from Yarrowia lipolytica (strain CLIB 122 / E 150) (Yeast).